We begin with the raw amino-acid sequence, 60 residues long: Short neurotoxin 1 (60 aa).

4 cysteine pairs are disulfide-bonded: Cys3–Cys22, Cys17–Cys39, Cys41–Cys52, and Cys53–Cys58.

This sequence belongs to the three-finger toxin family. Short-chain subfamily. Type I alpha-neurotoxin sub-subfamily. In terms of tissue distribution, expressed by the venom gland.

Its subcellular location is the secreted. Functionally, binds to muscle nicotinic acetylcholine receptor (nAChR) and inhibit acetylcholine from binding to the receptor, thereby impairing neuromuscular transmission. In Dendroaspis viridis (Western green mamba), this protein is Short neurotoxin 1.